The sequence spans 224 residues: Deoxyribose-phosphate aldolase (224 aa).

The Proton donor/acceptor role is filled by Asp-92. Lys-155 (schiff-base intermediate with acetaldehyde) is an active-site residue. Lys-184 functions as the Proton donor/acceptor in the catalytic mechanism.

It belongs to the DeoC/FbaB aldolase family. DeoC type 1 subfamily.

It localises to the cytoplasm. The enzyme catalyses 2-deoxy-D-ribose 5-phosphate = D-glyceraldehyde 3-phosphate + acetaldehyde. The protein operates within carbohydrate degradation; 2-deoxy-D-ribose 1-phosphate degradation; D-glyceraldehyde 3-phosphate and acetaldehyde from 2-deoxy-alpha-D-ribose 1-phosphate: step 2/2. Catalyzes a reversible aldol reaction between acetaldehyde and D-glyceraldehyde 3-phosphate to generate 2-deoxy-D-ribose 5-phosphate. This is Deoxyribose-phosphate aldolase from Clostridium perfringens (strain ATCC 13124 / DSM 756 / JCM 1290 / NCIMB 6125 / NCTC 8237 / Type A).